A 481-amino-acid polypeptide reads, in one-letter code: Proline--tRNA ligase (481 aa).

The protein belongs to the class-II aminoacyl-tRNA synthetase family. ProS type 3 subfamily. Homodimer.

It localises to the cytoplasm. The catalysed reaction is tRNA(Pro) + L-proline + ATP = L-prolyl-tRNA(Pro) + AMP + diphosphate. Its function is as follows. Catalyzes the attachment of proline to tRNA(Pro) in a two-step reaction: proline is first activated by ATP to form Pro-AMP and then transferred to the acceptor end of tRNA(Pro). This chain is Proline--tRNA ligase, found in Saccharolobus islandicus (strain Y.N.15.51 / Yellowstone #2) (Sulfolobus islandicus).